We begin with the raw amino-acid sequence, 405 residues long: Acetyl-CoA decarbonylase/synthase complex subunit delta (405 aa).

The protein belongs to the CdhD family. In terms of assembly, heterodimer of delta and gamma chains. The ACDS complex is made up of alpha, epsilon, beta, gamma and delta chains with a probable stoichiometry of (alpha(2)epsilon(2))(4)-beta(8)-(gamma(1)delta(1))(8).

Part of a complex that catalyzes the reversible cleavage of acetyl-CoA, allowing autotrophic growth from CO(2). Probably maintains the overall quaternary structure of the ACDS complex. This chain is Acetyl-CoA decarbonylase/synthase complex subunit delta, found in Methanocaldococcus jannaschii (strain ATCC 43067 / DSM 2661 / JAL-1 / JCM 10045 / NBRC 100440) (Methanococcus jannaschii).